The chain runs to 132 residues: Peptide methionine sulfoxide reductase MsrB (132 aa).

The region spanning 9–131 (DAQWRAELSP…NSASLSFHPK (123 aa)) is the MsrB domain. Zn(2+) contacts are provided by Cys48, Cys51, Cys97, and Cys100. Cys120 acts as the Nucleophile in catalysis.

Belongs to the MsrB Met sulfoxide reductase family. Zn(2+) is required as a cofactor.

The enzyme catalyses L-methionyl-[protein] + [thioredoxin]-disulfide + H2O = L-methionyl-(R)-S-oxide-[protein] + [thioredoxin]-dithiol. The chain is Peptide methionine sulfoxide reductase MsrB from Thiobacillus denitrificans (strain ATCC 25259 / T1).